The sequence spans 133 residues: MSTEASTGETPEFQSYDHRGSPTQEAMKREIQSLIQNLVKLSRTAPAIHVLIPPEIVMYVEGSRNPDIYNREFVETVQRMNQMLKGRSEALQALQAQIAHQLQIAIPEMKDDIERAVEATGGKVPITGITLDP.

Over residues 1–13 (MSTEASTGETPEF) the composition is skewed to polar residues. Residues 1-28 (MSTEASTGETPEFQSYDHRGSPTQEAMK) are disordered. Residues 15–28 (SYDHRGSPTQEAMK) are compositionally biased toward basic and acidic residues.

The protein belongs to the Mediator complex subunit 10 family. As to quaternary structure, component of the Mediator complex.

It is found in the nucleus. Functionally, component of the Mediator complex, a coactivator involved in the regulated transcription of nearly all RNA polymerase II-dependent genes. Mediator functions as a bridge to convey information from gene-specific regulatory proteins to the basal RNA polymerase II transcription machinery. Mediator is recruited to promoters by direct interactions with regulatory proteins and serves as a scaffold for the assembly of a functional preinitiation complex with RNA polymerase II and the general transcription factors. This Phaeosphaeria nodorum (strain SN15 / ATCC MYA-4574 / FGSC 10173) (Glume blotch fungus) protein is Mediator of RNA polymerase II transcription subunit 10 (NUT2).